We begin with the raw amino-acid sequence, 371 residues long: Transaldolase (371 aa).

K140 (schiff-base intermediate with substrate) is an active-site residue.

This sequence belongs to the transaldolase family. Type 2 subfamily.

It localises to the cytoplasm. It carries out the reaction D-sedoheptulose 7-phosphate + D-glyceraldehyde 3-phosphate = D-erythrose 4-phosphate + beta-D-fructose 6-phosphate. The protein operates within carbohydrate degradation; pentose phosphate pathway; D-glyceraldehyde 3-phosphate and beta-D-fructose 6-phosphate from D-ribose 5-phosphate and D-xylulose 5-phosphate (non-oxidative stage): step 2/3. Its function is as follows. Transaldolase is important for the balance of metabolites in the pentose-phosphate pathway. This Frankia alni (strain DSM 45986 / CECT 9034 / ACN14a) protein is Transaldolase.